The primary structure comprises 66 residues: uncharacterized protein (66 aa).

To M.jannaschii MJ0582.

This is an uncharacterized protein from Methanocaldococcus jannaschii (strain ATCC 43067 / DSM 2661 / JAL-1 / JCM 10045 / NBRC 100440) (Methanococcus jannaschii).